Reading from the N-terminus, the 292-residue chain is Lipoyl synthase (292 aa).

[4Fe-4S] cluster-binding residues include cysteine 34, cysteine 39, cysteine 45, cysteine 60, cysteine 64, cysteine 67, and serine 273. Residues 46 to 262 (WNKKHATVMI…KYVAYSKGFL (217 aa)) form the Radical SAM core domain.

Belongs to the radical SAM superfamily. Lipoyl synthase family. It depends on [4Fe-4S] cluster as a cofactor.

Its subcellular location is the cytoplasm. The catalysed reaction is [[Fe-S] cluster scaffold protein carrying a second [4Fe-4S](2+) cluster] + N(6)-octanoyl-L-lysyl-[protein] + 2 oxidized [2Fe-2S]-[ferredoxin] + 2 S-adenosyl-L-methionine + 4 H(+) = [[Fe-S] cluster scaffold protein] + N(6)-[(R)-dihydrolipoyl]-L-lysyl-[protein] + 4 Fe(3+) + 2 hydrogen sulfide + 2 5'-deoxyadenosine + 2 L-methionine + 2 reduced [2Fe-2S]-[ferredoxin]. It participates in protein modification; protein lipoylation via endogenous pathway; protein N(6)-(lipoyl)lysine from octanoyl-[acyl-carrier-protein]: step 2/2. Functionally, catalyzes the radical-mediated insertion of two sulfur atoms into the C-6 and C-8 positions of the octanoyl moiety bound to the lipoyl domains of lipoate-dependent enzymes, thereby converting the octanoylated domains into lipoylated derivatives. This chain is Lipoyl synthase, found in Ehrlichia ruminantium (strain Welgevonden).